Consider the following 189-residue polypeptide: uncharacterized protein (189 aa).

It belongs to the isochorismatase family.

This is an uncharacterized protein from Bacillus subtilis (strain 168).